A 1044-amino-acid chain; its full sequence is Disease resistance protein PIK6-NP (1044 aa).

A structured coiled coil (CC) domain region spans residues 3 to 184 (LAVGASEATM…PQIVSIKEPV (182 aa)). The region spanning 187–543 (KTVMENLEKW…IAEGFATEKQ (357 aa)) is the NB-ARC domain. The disordered stretch occupies residues 258–302 (QVSKQEEAGGSTESSSRDENTREPQGSSSTSSREENTAESGTKRM). LRR repeat units lie at residues 635–657 (LAQV…SFNY), 682–705 (MLVL…IEKL), and 706–728 (EYLE…VGQL). The interval 737–771 (GNKNTRKGLRLPQEKRNKAMKNPSPQGKTKEPAEK) is disordered. 6 LRR repeats span residues 808–834 (LTGL…LLSS), 840–862 (SCGL…LYNM), 866–888 (PRYL…ITSI), 889–911 (TTLN…ILRN), 935–958 (KGIL…EFKS), and 980–1004 (MPAL…ILEN).

It belongs to the disease resistance NB-LRR family.

Functionally, probable disease resistance protein. Resistance proteins guard the plant against pathogens that contain an appropriate avirulence protein via an indirect interaction with this avirulence protein. That triggers a defense system including the hypersensitive response, which restricts the pathogen growth. At the opposite of cultivar Kusabue, the cultivar Nipponbare doesn't recognize the effector avirulence protein AVR-Pik from M.oryzae. In Oryza sativa subsp. japonica (Rice), this protein is Disease resistance protein PIK6-NP.